A 138-amino-acid polypeptide reads, in one-letter code: Spermatid nuclear transition protein 4 (138 aa).

Over residues 1–11 (AKVSRKPREPR) the composition is skewed to basic and acidic residues. Residues 1–138 (AKVSRKPREP…QGVTRRGRRY (138 aa)) are disordered. A Phosphoserine; by PKC modification is found at Ser4. The Nuclear localization signal signature appears at 5–23 (RKPREPRTAVTQSTRRIKR). Basic residues-rich tracts occupy residues 19 to 34 (RRIKRKKTLSKPRSRG), 43 to 57 (MKIKRALRRNLRRKI), and 65 to 74 (KKAKKARKHF). Thr26 bears the Phosphothreonine; by PKA mark. A Nuclear localization signal motif is present at residues 54–72 (RRKIQTSAGQPKKAKKARK). Residues 86-101 (NKKTNQNKRQNQNKRQ) are compositionally biased toward low complexity. A compositionally biased stretch (polar residues) spans 120–131 (PTTSCKWCSQGV).

The protein resides in the nucleus. Its subcellular location is the chromosome. In terms of biological role, involved in nuclear basic protein transition: histones are replaced by spermatid specific proteins which are themselves replaced by protamines in late spermatids. The polypeptide is Spermatid nuclear transition protein 4 (TNP4) (Sus scrofa (Pig)).